The following is a 473-amino-acid chain: Adenosylhomocysteinase (473 aa).

Residues T60, D135, and E197 each coordinate substrate. 198–200 is an NAD(+) binding site; it reads TTT. The substrate site is built by K227 and D231. NAD(+) is bound by residues N232, 261 to 266, E284, N319, 340 to 342, and N385; these read GFGDVG and IGH.

Belongs to the adenosylhomocysteinase family. NAD(+) is required as a cofactor.

It localises to the cytoplasm. The enzyme catalyses S-adenosyl-L-homocysteine + H2O = L-homocysteine + adenosine. It participates in amino-acid biosynthesis; L-homocysteine biosynthesis; L-homocysteine from S-adenosyl-L-homocysteine: step 1/1. May play a key role in the regulation of the intracellular concentration of adenosylhomocysteine. This Bradyrhizobium diazoefficiens (strain JCM 10833 / BCRC 13528 / IAM 13628 / NBRC 14792 / USDA 110) protein is Adenosylhomocysteinase.